A 138-amino-acid chain; its full sequence is UPF0047 protein MJ1081 (138 aa).

Belongs to the UPF0047 family.

The polypeptide is UPF0047 protein MJ1081 (Methanocaldococcus jannaschii (strain ATCC 43067 / DSM 2661 / JAL-1 / JCM 10045 / NBRC 100440) (Methanococcus jannaschii)).